A 197-amino-acid chain; its full sequence is Large ribosomal subunit protein uL10 (197 aa).

The interval 162-197 is disordered; the sequence is READGETAETPAQETASDDSKSTKAEASDASTTENK. Residues 179 to 188 are compositionally biased toward basic and acidic residues; sequence DDSKSTKAEA.

The protein belongs to the universal ribosomal protein uL10 family. In terms of assembly, part of the ribosomal stalk of the 50S ribosomal subunit. The N-terminus interacts with L11 and the large rRNA to form the base of the stalk. The C-terminus forms an elongated spine to which L12 dimers bind in a sequential fashion forming a multimeric L10(L12)X complex.

Forms part of the ribosomal stalk, playing a central role in the interaction of the ribosome with GTP-bound translation factors. The protein is Large ribosomal subunit protein uL10 of Oenococcus oeni (strain ATCC BAA-331 / PSU-1).